The following is a 67-amino-acid chain: Large ribosomal subunit protein bL32 (67 aa).

Basic residues predominate over residues 1–19 (MAVPKRKMSRSNTRARRSQ). Residues 1–21 (MAVPKRKMSRSNTRARRSQWK) are disordered.

This sequence belongs to the bacterial ribosomal protein bL32 family.

The chain is Large ribosomal subunit protein bL32 from Clavibacter michiganensis subsp. michiganensis (strain NCPPB 382).